Reading from the N-terminus, the 361-residue chain is Aminomethyltransferase (361 aa).

This sequence belongs to the GcvT family. The glycine cleavage system is composed of four proteins: P, T, L and H.

The catalysed reaction is N(6)-[(R)-S(8)-aminomethyldihydrolipoyl]-L-lysyl-[protein] + (6S)-5,6,7,8-tetrahydrofolate = N(6)-[(R)-dihydrolipoyl]-L-lysyl-[protein] + (6R)-5,10-methylene-5,6,7,8-tetrahydrofolate + NH4(+). The glycine cleavage system catalyzes the degradation of glycine. The polypeptide is Aminomethyltransferase (Bacteroides fragilis (strain ATCC 25285 / DSM 2151 / CCUG 4856 / JCM 11019 / LMG 10263 / NCTC 9343 / Onslow / VPI 2553 / EN-2)).